A 445-amino-acid chain; its full sequence is UPF0210 protein llmg_1581 (445 aa).

It belongs to the UPF0210 family. In terms of assembly, homodimer.

The chain is UPF0210 protein llmg_1581 from Lactococcus lactis subsp. cremoris (strain MG1363).